We begin with the raw amino-acid sequence, 278 residues long: 4-deoxy-L-threo-5-hexosulose-uronate ketol-isomerase (278 aa).

Zn(2+) contacts are provided by histidine 196, histidine 198, glutamate 203, and histidine 245.

Belongs to the KduI family. Zn(2+) serves as cofactor.

It carries out the reaction 5-dehydro-4-deoxy-D-glucuronate = 3-deoxy-D-glycero-2,5-hexodiulosonate. It participates in glycan metabolism; pectin degradation; 2-dehydro-3-deoxy-D-gluconate from pectin: step 4/5. Functionally, catalyzes the isomerization of 5-dehydro-4-deoxy-D-glucuronate to 3-deoxy-D-glycero-2,5-hexodiulosonate. This chain is 4-deoxy-L-threo-5-hexosulose-uronate ketol-isomerase, found in Salmonella heidelberg (strain SL476).